The chain runs to 385 residues: 8-amino-7-oxononanoate synthase (385 aa).

Residue arginine 21 participates in substrate binding. A pyridoxal 5'-phosphate-binding site is contributed by 108-109 (GF). Histidine 133 contacts substrate. Positions 179, 207, and 233 each coordinate pyridoxal 5'-phosphate. Residue lysine 236 is modified to N6-(pyridoxal phosphate)lysine. Position 352 (threonine 352) interacts with substrate.

The protein belongs to the class-II pyridoxal-phosphate-dependent aminotransferase family. BioF subfamily. In terms of assembly, homodimer. Pyridoxal 5'-phosphate serves as cofactor.

It carries out the reaction 6-carboxyhexanoyl-[ACP] + L-alanine + H(+) = (8S)-8-amino-7-oxononanoate + holo-[ACP] + CO2. It participates in cofactor biosynthesis; biotin biosynthesis. Its function is as follows. Catalyzes the decarboxylative condensation of pimeloyl-[acyl-carrier protein] and L-alanine to produce 8-amino-7-oxononanoate (AON), [acyl-carrier protein], and carbon dioxide. The protein is 8-amino-7-oxononanoate synthase of Salmonella typhimurium (strain LT2 / SGSC1412 / ATCC 700720).